Reading from the N-terminus, the 340-residue chain is HTH-type transcriptional regulator PtxS (340 aa).

The HTH lacI-type domain occupies 12-67 (VTINQVAEAAGVSKASVSRYIGGDRQLLADATARRIERAIDQLDYRPNQMARGLKR). The segment at residues 14-33 (INQVAEAAGVSKASVSRYIG) is a DNA-binding region (H-T-H motif).

As to quaternary structure, interacts with PtxR in the absence of 2-ketogluconate. Binding of the 2-ketogluconate effector to PtxS causes PtxS/PtxR complex dissociation.

Its activity is regulated as follows. 2-ketogluconate acts as a molecular effector and causes dissociation of the PtxS/PtxR complex. Functionally, negatively regulates glucose metabolism by binding directly to the promoter region of the kgu and gad operons. It also negatively regulates its own synthesis. In addition, in pathogenic strains, PtxS modulates PtxR activity in response to 2-ketogluconate. In the presence of PtxR, which also binds to the kgu and gad promoter regions, PtxS and PtxR form a tight complex, creating a DNA-loop that prevents RNA polymerase promoter access and expression of the glucose metabolism genes. Binding of the 2-ketogluconate effector to PtxS causes PtxS/PtxR complex dissociation and leads to the dissolution of the repression DNA-loop, facilitating the entry of the RNA polymerase and enabling the transcription of the genes. Also plays an important role in the regulation of the expression of the virulence factor exotoxin A (toxA). PtxS does not bind directly to the toxA promoter but negatively regulates the production of exotoxin A by binding to PtxR and interfering with its positive regulator activity. In the presence of 2-ketogluconate, PtxS is released and PtxR can recruit RNA polymerase. This chain is HTH-type transcriptional regulator PtxS, found in Pseudomonas aeruginosa (strain ATCC 15692 / DSM 22644 / CIP 104116 / JCM 14847 / LMG 12228 / 1C / PRS 101 / PAO1).